The sequence spans 196 residues: Probable malonic semialdehyde reductase RutE (196 aa).

It belongs to the nitroreductase family. HadB/RutE subfamily. Requires FMN as cofactor.

The enzyme catalyses 3-hydroxypropanoate + NADP(+) = 3-oxopropanoate + NADPH + H(+). Functionally, may reduce toxic product malonic semialdehyde to 3-hydroxypropionic acid, which is excreted. The protein is Probable malonic semialdehyde reductase RutE of Escherichia coli O81 (strain ED1a).